Here is a 154-residue protein sequence, read N- to C-terminus: Nuclear cap-binding protein subunit 2 (154 aa).

The disordered stretch occupies residues methionine 1–glutamate 23. Residues serine 9 to glutamate 23 show a composition bias toward basic and acidic residues. MRNA contacts are provided by residues tyrosine 10, tyrosine 33, arginine 102–aspartate 106, arginine 113–arginine 117, and glutamine 123–valine 124. Residues threonine 30–glycine 108 form the RRM domain.

Belongs to the RRM NCBP2 family. As to quaternary structure, component of the nuclear cap-binding complex (CBC), a heterodimer composed of Cbp80 and Cbp20 that interacts with m7GpppG-capped RNA. Interacts with Ars2.

Its subcellular location is the nucleus. Its function is as follows. Component of the cap-binding complex (CBC), which binds co-transcriptionally to the 5' cap of pre-mRNAs and is involved in various processes such as pre-mRNA splicing and RNA-mediated gene silencing (RNAi). The CBC complex is involved in miRNA-mediated RNA interference via its interaction with Ars2 and is required for primary microRNAs (miRNAs) processing. Also involved in innate immunity via the short interfering RNAs (siRNAs) processing machinery by restricting the viral RNA production. In the CBC complex, Cbp20 recognizes and binds capped RNAs (m7GpppG-capped RNA) but requires Cbp80 to stabilize the movement of its N-terminal loop and lock the CBC into a high affinity cap-binding state with the cap structure. This chain is Nuclear cap-binding protein subunit 2 (Cbp20), found in Drosophila grimshawi (Hawaiian fruit fly).